A 461-amino-acid polypeptide reads, in one-letter code: ATP synthase subunit beta (461 aa).

149 to 156 (GGAGVGKT) lines the ATP pocket.

The protein belongs to the ATPase alpha/beta chains family. F-type ATPases have 2 components, CF(1) - the catalytic core - and CF(0) - the membrane proton channel. CF(1) has five subunits: alpha(3), beta(3), gamma(1), delta(1), epsilon(1). CF(0) has three main subunits: a(1), b(2) and c(9-12). The alpha and beta chains form an alternating ring which encloses part of the gamma chain. CF(1) is attached to CF(0) by a central stalk formed by the gamma and epsilon chains, while a peripheral stalk is formed by the delta and b chains.

The protein resides in the cell membrane. The enzyme catalyses ATP + H2O + 4 H(+)(in) = ADP + phosphate + 5 H(+)(out). Its function is as follows. Produces ATP from ADP in the presence of a proton gradient across the membrane. The catalytic sites are hosted primarily by the beta subunits. The protein is ATP synthase subunit beta of Caldanaerobacter subterraneus subsp. tengcongensis (strain DSM 15242 / JCM 11007 / NBRC 100824 / MB4) (Thermoanaerobacter tengcongensis).